A 177-amino-acid polypeptide reads, in one-letter code: MSRVGKKPVPVPSGVTATVTGQTVKMKGSKGELQFVVPPQVIVEFKDGAVSVQPKDQSKQARSLWGTSRAQVANLVEGVSKGFEKKLEITGVGYRAAMAGKALKLSLGYSHDIEYEIPAGITIVTPKPTEIVVSGIDRQRVGQVAAEIREYRGPEPYKGKGVKYAGEFIFRKEGKKK.

This sequence belongs to the universal ribosomal protein uL6 family. Part of the 50S ribosomal subunit.

In terms of biological role, this protein binds to the 23S rRNA, and is important in its secondary structure. It is located near the subunit interface in the base of the L7/L12 stalk, and near the tRNA binding site of the peptidyltransferase center. This is Large ribosomal subunit protein uL6 from Methylorubrum populi (strain ATCC BAA-705 / NCIMB 13946 / BJ001) (Methylobacterium populi).